We begin with the raw amino-acid sequence, 460 residues long: Bifunctional protein GlmU (460 aa).

Positions 1–232 are pyrophosphorylase; it reads MENVAAIILA…SDEIMGVNDR (232 aa). Residues 9-12, Lys23, Gln75, and 80-81 contribute to the UDP-N-acetyl-alpha-D-glucosamine site; these read LAAG and GT. Asp105 is a Mg(2+) binding site. UDP-N-acetyl-alpha-D-glucosamine-binding residues include Gly142, Glu157, Asn172, and Asn230. Position 230 (Asn230) interacts with Mg(2+). Positions 233 to 253 are linker; that stretch reads AQLAQAARILRRRINRDLMLS. The interval 254–460 is N-acetyltransferase; the sequence is GVSLVDPEQT…GWRIRMKKKT (207 aa). The UDP-N-acetyl-alpha-D-glucosamine site is built by Arg336 and Lys354. His366 functions as the Proton acceptor in the catalytic mechanism. UDP-N-acetyl-alpha-D-glucosamine-binding residues include Tyr369 and Asn380. Residues 389 to 390, Ser408, Ala426, and Arg443 each bind acetyl-CoA; that span reads NY.

In the N-terminal section; belongs to the N-acetylglucosamine-1-phosphate uridyltransferase family. It in the C-terminal section; belongs to the transferase hexapeptide repeat family. Homotrimer. Mg(2+) is required as a cofactor.

The protein localises to the cytoplasm. It catalyses the reaction alpha-D-glucosamine 1-phosphate + acetyl-CoA = N-acetyl-alpha-D-glucosamine 1-phosphate + CoA + H(+). The enzyme catalyses N-acetyl-alpha-D-glucosamine 1-phosphate + UTP + H(+) = UDP-N-acetyl-alpha-D-glucosamine + diphosphate. It participates in nucleotide-sugar biosynthesis; UDP-N-acetyl-alpha-D-glucosamine biosynthesis; N-acetyl-alpha-D-glucosamine 1-phosphate from alpha-D-glucosamine 6-phosphate (route II): step 2/2. Its pathway is nucleotide-sugar biosynthesis; UDP-N-acetyl-alpha-D-glucosamine biosynthesis; UDP-N-acetyl-alpha-D-glucosamine from N-acetyl-alpha-D-glucosamine 1-phosphate: step 1/1. The protein operates within bacterial outer membrane biogenesis; LPS lipid A biosynthesis. Functionally, catalyzes the last two sequential reactions in the de novo biosynthetic pathway for UDP-N-acetylglucosamine (UDP-GlcNAc). The C-terminal domain catalyzes the transfer of acetyl group from acetyl coenzyme A to glucosamine-1-phosphate (GlcN-1-P) to produce N-acetylglucosamine-1-phosphate (GlcNAc-1-P), which is converted into UDP-GlcNAc by the transfer of uridine 5-monophosphate (from uridine 5-triphosphate), a reaction catalyzed by the N-terminal domain. This chain is Bifunctional protein GlmU, found in Pelobacter propionicus (strain DSM 2379 / NBRC 103807 / OttBd1).